The primary structure comprises 234 residues: Exotoxin type G (234 aa).

The N-terminal stretch at M1–A24 is a signal peptide.

This sequence belongs to the staphylococcal/streptococcal toxin family.

Functionally, mitogenic for human peripheral blood lymphocytes. The chain is Exotoxin type G (speG) from Streptococcus pyogenes serotype M3 (strain ATCC BAA-595 / MGAS315).